Here is a 290-residue protein sequence, read N- to C-terminus: 33 kDa chaperonin (290 aa).

Cystine bridges form between Cys-235–Cys-237 and Cys-268–Cys-271.

Belongs to the HSP33 family. Post-translationally, under oxidizing conditions two disulfide bonds are formed involving the reactive cysteines. Under reducing conditions zinc is bound to the reactive cysteines and the protein is inactive.

It is found in the cytoplasm. Functionally, redox regulated molecular chaperone. Protects both thermally unfolding and oxidatively damaged proteins from irreversible aggregation. Plays an important role in the bacterial defense system toward oxidative stress. This is 33 kDa chaperonin from Streptococcus pyogenes serotype M1.